The following is a 79-amino-acid chain: Polcalcin Bra r 1 (79 aa).

2 EF-hand domains span residues 1 to 36 (MADA…LGSV) and 39 to 71 (DDVT…NPGL). Ca(2+) contacts are provided by Asp-14, Asp-16, Asp-18, Lys-20, Glu-25, Asp-49, Asp-51, Asp-53, Asn-55, and Glu-60.

The chain is Polcalcin Bra r 1 from Brassica campestris (Field mustard).